Here is a 423-residue protein sequence, read N- to C-terminus: Polyglutamylase complex subunit TTLL1 (423 aa).

Residues 1–367 (MAGRVKWVTD…NGEIPDCKWN (367 aa)) form the TTL domain. Residues Lys-138, 144 to 145 (QG), 181 to 184 (SVYI), and 194 to 196 (KFD) each bind ATP. Gln-144 serves as a coordination point for a protein. Arg-220 lines the L-glutamate pocket. 241–242 (TN) lines the ATP pocket. Lys-259 contacts L-glutamate. Residues Asp-313, Glu-326, and Asn-328 each contribute to the Mg(2+) site. Residue Lys-344 participates in L-glutamate binding. Residues 390-423 (DGAERELRNRPGQPVGPRAGRSRDSGRSVLTTWK) are disordered.

It belongs to the tubulin polyglutamylase family. Part of the neuronal tubulin polyglutamylase complex which contains TPGS1, TPGS2, TTLL1, LRRC49 and NICN1. Interacts with PCM1, CSTPP1 and LRRC49. Requires Mg(2+) as cofactor. Highly expressed in brain, heart and kidney. Expressed in liver, lung, muscle, spleen, testis and trachea. In the brain, expressed in ependymal cilia, cortex, corpus callosum and striatum. Expressed in blastomere.

The protein localises to the cytoplasm. It is found in the cytoskeleton. It localises to the cilium basal body. Its subcellular location is the cilium axoneme. The protein resides in the cell projection. The protein localises to the cilium. It is found in the flagellum. It carries out the reaction (L-glutamyl)(n)-gamma-L-glutamyl-L-glutamyl-[protein] + L-glutamate + ATP = (L-glutamyl)(n+1)-gamma-L-glutamyl-L-glutamyl-[protein] + ADP + phosphate + H(+). Its function is as follows. Catalytic subunit of a polyglutamylase complex which modifies tubulin, generating side chains of glutamate on the gamma-carboxyl group of specific glutamate residues within the C-terminal tail of tubulin. Probably involved in the side-chain elongation step of the polyglutamylation reaction rather than the initiation step. Modifies both alpha- and beta-tubulins with a preference for the alpha-tail. Unlike most polyglutamylases of the tubulin--tyrosine ligase family, only displays a catalytic activity when in complex with other proteins as it is most likely lacking domains important for autonomous activity. Part of the neuronal tubulin polyglutamylase complex. Mediates cilia and flagella polyglutamylation which is essential for their biogenesis and motility. Involved in respiratory motile cilia function through the regulation of beating asymmetry. Essential for sperm flagella biogenesis, motility and male fertility. Also mediates glutamylation of non-tubulin proteins. Involved in KLF4 glutamylation which impedes its ubiquitination, thereby leading to somatic cell reprogramming, pluripotency maintenance and embryogenesis. This is Polyglutamylase complex subunit TTLL1 from Mus musculus (Mouse).